Consider the following 283-residue polypeptide: Thymidylate synthase (283 aa).

R22 is a dUMP binding site. The active-site Nucleophile is the C160. DUMP contacts are provided by residues 180-183 (RSCD), N191, and 221-223 (HIY). D183 is a (6R)-5,10-methylene-5,6,7,8-tetrahydrofolate binding site. A (6R)-5,10-methylene-5,6,7,8-tetrahydrofolate-binding site is contributed by S282.

It belongs to the thymidylate synthase family. Bacterial-type ThyA subfamily. Homodimer.

The protein localises to the cytoplasm. The enzyme catalyses dUMP + (6R)-5,10-methylene-5,6,7,8-tetrahydrofolate = 7,8-dihydrofolate + dTMP. It participates in pyrimidine metabolism; dTTP biosynthesis. Functionally, catalyzes the reductive methylation of 2'-deoxyuridine-5'-monophosphate (dUMP) to 2'-deoxythymidine-5'-monophosphate (dTMP) while utilizing 5,10-methylenetetrahydrofolate (mTHF) as the methyl donor and reductant in the reaction, yielding dihydrofolate (DHF) as a by-product. This enzymatic reaction provides an intracellular de novo source of dTMP, an essential precursor for DNA biosynthesis. The protein is Thymidylate synthase of Vibrio atlanticus (strain LGP32) (Vibrio splendidus (strain Mel32)).